Consider the following 218-residue polypeptide: Hypoxanthine-guanine phosphoribosyltransferase (218 aa).

The residue at position 2 (alanine 2) is an N-acetylalanine. Lysine 69 is a GMP binding site. Lysine 103 is subject to N6-acetyllysine. Residue lysine 115 forms a Glycyl lysine isopeptide (Lys-Gly) (interchain with G-Cter in SUMO1); alternate linkage. Lysine 115 is covalently cross-linked (Glycyl lysine isopeptide (Lys-Gly) (interchain with G-Cter in SUMO2); alternate). Residues 134-142 (EDIIDTGKT), lysine 166, 186-188 (KFV), and aspartate 194 each bind GMP. The Proton acceptor role is filled by aspartate 138. Position 142 is a phosphothreonine (threonine 142). A Mg(2+)-binding site is contributed by aspartate 194.

It belongs to the purine/pyrimidine phosphoribosyltransferase family. In terms of assembly, homotetramer. Requires Mg(2+) as cofactor.

The protein resides in the cytoplasm. The catalysed reaction is IMP + diphosphate = hypoxanthine + 5-phospho-alpha-D-ribose 1-diphosphate. It carries out the reaction GMP + diphosphate = guanine + 5-phospho-alpha-D-ribose 1-diphosphate. The protein operates within purine metabolism; IMP biosynthesis via salvage pathway; IMP from hypoxanthine: step 1/1. Its function is as follows. Converts guanine to guanosine monophosphate, and hypoxanthine to inosine monophosphate. Transfers the 5-phosphoribosyl group from 5-phosphoribosylpyrophosphate onto the purine. Plays a central role in the generation of purine nucleotides through the purine salvage pathway. The chain is Hypoxanthine-guanine phosphoribosyltransferase (HPRT1) from Homo sapiens (Human).